We begin with the raw amino-acid sequence, 167 residues long: RNA pyrophosphohydrolase (167 aa).

Positions 8 to 159 (PYRTCVGVML…KRPVYERVVK (152 aa)) constitute a Nudix hydrolase domain. Residues 47–68 (GGVDPGEDTWAAAKRELYEETS) carry the Nudix box motif.

The protein belongs to the Nudix hydrolase family. RppH subfamily. It depends on a divalent metal cation as a cofactor.

Its function is as follows. Accelerates the degradation of transcripts by removing pyrophosphate from the 5'-end of triphosphorylated RNA, leading to a more labile monophosphorylated state that can stimulate subsequent ribonuclease cleavage. The protein is RNA pyrophosphohydrolase of Bradyrhizobium diazoefficiens (strain JCM 10833 / BCRC 13528 / IAM 13628 / NBRC 14792 / USDA 110).